Here is a 164-residue protein sequence, read N- to C-terminus: Lipoprotein signal peptidase (164 aa).

2 helical membrane-spanning segments follow: residues 68–88 (TILV…LWNA) and 96–116 (FWGL…RAMF). Catalysis depends on residues Asp121 and Asp139. A helical membrane pass occupies residues 134–154 (TFNVADSAIVVGSCLLLIDLL).

It belongs to the peptidase A8 family.

It localises to the cell inner membrane. The catalysed reaction is Release of signal peptides from bacterial membrane prolipoproteins. Hydrolyzes -Xaa-Yaa-Zaa-|-(S,diacylglyceryl)Cys-, in which Xaa is hydrophobic (preferably Leu), and Yaa (Ala or Ser) and Zaa (Gly or Ala) have small, neutral side chains.. It functions in the pathway protein modification; lipoprotein biosynthesis (signal peptide cleavage). In terms of biological role, this protein specifically catalyzes the removal of signal peptides from prolipoproteins. The sequence is that of Lipoprotein signal peptidase from Solibacter usitatus (strain Ellin6076).